Reading from the N-terminus, the 127-residue chain is Glycine cleavage system H protein (127 aa).

A Lipoyl-binding domain is found at 22-104 (EAVIGITQFA…YTDGWMVRVK (83 aa)). Residue lysine 63 is modified to N6-lipoyllysine.

The protein belongs to the GcvH family. As to quaternary structure, the glycine cleavage system is composed of four proteins: P, T, L and H. The cofactor is (R)-lipoate.

In terms of biological role, the glycine cleavage system catalyzes the degradation of glycine. The H protein shuttles the methylamine group of glycine from the P protein to the T protein. The protein is Glycine cleavage system H protein of Nitratidesulfovibrio vulgaris (strain DSM 19637 / Miyazaki F) (Desulfovibrio vulgaris).